The following is a 760-amino-acid chain: Semaphorin-4A (760 aa).

The signal sequence occupies residues 1 to 32 (MALPSLGQDSWSLLRVFFFQLFLLPSLPPASG). The Extracellular segment spans residues 33 to 682 (TGGQGPMPRV…MAAQRSYWPH (650 aa)). Residues 36–494 (QGPMPRVKYH…FSGGIWRVPR (459 aa)) enclose the Sema domain. The cysteines at positions 113 and 124 are disulfide-linked. Residues N120 and N135 are each glycosylated (N-linked (GlcNAc...) asparagine). 3 disulfides stabilise this stretch: C142–C151, C269–C379, and C293–C339. N-linked (GlcNAc...) asparagine glycosylation occurs at N496. The region spanning 496-547 (NCSVYESCVDCVLARDPHCAWDPESRLCSLLSGSTKPWKQDMERGNPEWVCT) is the PSI domain. 3 cysteine pairs are disulfide-bonded: C497–C514, C506–C523, and C579–C623. The region spanning 572–630 (NSILELPCPHLSALASYHWSHGRAKISEASATVYNGSLLLLPQDGVGGLYQCVATENGY) is the Ig-like C2-type domain. N606 is a glycosylation site (N-linked (GlcNAc...) asparagine). The chain crosses the membrane as a helical span at residues 683 to 703 (FLIVTVLLAIVLLGVLTLLLA). At 704 to 760 (SPLGALRARGKVQGCGMLPPREKAPLSRDQHLQPSKDHRTSASDVDADNNHLGAEVA) the chain is on the cytoplasmic side. Residues 720–760 (MLPPREKAPLSRDQHLQPSKDHRTSASDVDADNNHLGAEVA) are disordered. A compositionally biased stretch (basic and acidic residues) spans 723 to 744 (PREKAPLSRDQHLQPSKDHRTS).

It belongs to the semaphorin family. In terms of assembly, interacts with PLXNB1, PLXNB2 and PLXNB3. Interacts with PLXND1. Interacts with TIMD2. In terms of tissue distribution, expressed in neurons and glia in the developing hippocampus.

It localises to the cell membrane. In terms of biological role, cell surface receptor for PLXNB1, PLXNB2, PLXNB3 and PLXND1 that plays an important role in cell-cell signaling. Regulates glutamatergic and GABAergic synapse development. Promotes the development of inhibitory synapses in a PLXNB1-dependent manner and promotes the development of excitatory synapses in a PLXNB2-dependent manner. Plays a role in priming antigen-specific T-cells, promotes differentiation of Th1 T-helper cells, and thereby contributes to adaptive immunity. Promotes phosphorylation of TIMD2. Inhibits angiogenesis. Promotes axon growth cone collapse. Inhibits axonal extension by providing local signals to specify territories inaccessible for growing axons. In Mus musculus (Mouse), this protein is Semaphorin-4A (Sema4a).